Reading from the N-terminus, the 148-residue chain is MRTVILGVIGSDAHVVGITILERAFEAAGFNVVNLGVQSSQSEFIDAADEHDAEAILVSSLYGHAEQDCQGFQQQINEAGLDVTTYIGGNLAVGQDSFEETRETFKALGFDRVFNSETDPEEAIEALKADLGHRSREEASSEKVQLGS.

Positions 1-134 (MRTVILGVIG…EALKADLGHR (134 aa)) constitute a B12-binding domain. Residues 11-15 (SDAHV), His-14, 59-61 (SSL), and 90-94 (NLAVG) each bind adenosylcob(III)alamin. Over residues 129-141 (ADLGHRSREEASS) the composition is skewed to basic and acidic residues. The interval 129–148 (ADLGHRSREEASSEKVQLGS) is disordered.

Belongs to the methylaspartate mutase GlmS subunit family. In terms of assembly, heterotetramer composed of 2 epsilon subunits (GlmE) and 2 sigma subunits (GlmS). GlmE exists as a homodimer and GlmS as a monomer. Adenosylcob(III)alamin is required as a cofactor.

It catalyses the reaction (2S,3S)-3-methyl-L-aspartate = L-glutamate. It participates in amino-acid degradation; L-glutamate degradation via mesaconate pathway; acetate and pyruvate from L-glutamate: step 1/4. In terms of biological role, catalyzes the carbon skeleton rearrangement of L-glutamate to L-threo-3-methylaspartate ((2S,3S)-3-methylaspartate). In Haloarcula marismortui (strain ATCC 43049 / DSM 3752 / JCM 8966 / VKM B-1809) (Halobacterium marismortui), this protein is Glutamate mutase sigma subunit 2.